The sequence spans 131 residues: Transcription antitermination protein NusB (131 aa).

Belongs to the NusB family.

Involved in transcription antitermination. Required for transcription of ribosomal RNA (rRNA) genes. Binds specifically to the boxA antiterminator sequence of the ribosomal RNA (rrn) operons. This is Transcription antitermination protein NusB from Campylobacter curvus (strain 525.92).